Here is a 276-residue protein sequence, read N- to C-terminus: Urease accessory protein UreD (276 aa).

It belongs to the UreD family. In terms of assembly, ureD, UreF and UreG form a complex that acts as a GTP-hydrolysis-dependent molecular chaperone, activating the urease apoprotein by helping to assemble the nickel containing metallocenter of UreC. The UreE protein probably delivers the nickel.

It localises to the cytoplasm. Its function is as follows. Required for maturation of urease via the functional incorporation of the urease nickel metallocenter. This is Urease accessory protein UreD from Paracidovorax citrulli (strain AAC00-1) (Acidovorax citrulli).